Reading from the N-terminus, the 376-residue chain is Metal tolerance protein 6 (376 aa).

A disordered region spans residues 1–28 (MAAAAGVAAGTGRGSGEGEELLPNAVEG). Over 1–123 (MAAAAGVAAG…CEKVARSEAL (123 aa)) the chain is Cytoplasmic. The helical transmembrane segment at 124-144 (AIRLSNIANMVLFAAKVYASI) threads the bilayer. At 145 to 149 (RSGSL) the chain is on the vacuolar side. Residues 150-170 (AIIASTLDSLLDLLSGFILWF) form a helical membrane-spanning segment. Residues 171–191 (TAFSKKTSNPYRYPIGKRRMQ) are Cytoplasmic-facing. Residues 192–212 (PLGILVFASVMATLGLQIILE) traverse the membrane as a helical segment. At 213 to 231 (STRSLFYDGDTFRLTKEQE) the chain is on the vacuolar side. A helical membrane pass occupies residues 232–252 (KWVVDIMLSVTSVKLLLVVYC). Topologically, residues 253–376 (RSFTNEILAI…PEHARSHDTL (124 aa)) are cytoplasmic.

The protein belongs to the cation diffusion facilitator (CDF) transporter (TC 2.A.4) family. SLC30A subfamily.

The protein resides in the vacuole membrane. Its function is as follows. Involved in sequestration of excess metal in the cytoplasm into vacuoles to maintain metal homeostasis. In Oryza sativa subsp. japonica (Rice), this protein is Metal tolerance protein 6 (MTP6).